Here is a 382-residue protein sequence, read N- to C-terminus: Enoyl-[acyl-carrier-protein] reductase, mitochondrial (382 aa).

The N-terminal 17 residues, 1–17 (MSSFLSKRFLSFSQRAM), are a transit peptide targeting the mitochondrion. Tyrosine 77 serves as the catalytic Proton donor. NADP(+) is bound by residues asparagine 159, 187-190 (TSSV), 210-212 (RDR), 285-288 (YGGM), 310-312 (FWV), and lysine 375.

This sequence belongs to the zinc-containing alcohol dehydrogenase family. Quinone oxidoreductase subfamily. In terms of assembly, homodimer.

The protein resides in the mitochondrion matrix. It carries out the reaction a 2,3-saturated acyl-[ACP] + NADP(+) = a (2E)-enoyl-[ACP] + NADPH + H(+). In terms of biological role, catalyzes the NADPH-dependent reduction of trans-2-enoyl thioesters in mitochondrial fatty acid synthesis (fatty acid synthesis type II). Fatty acid chain elongation in mitochondria uses acyl carrier protein (ACP) as an acyl group carrier, but the enzyme accepts both ACP and CoA thioesters as substrates in vitro. Required for respiration and the maintenance of the mitochondrial compartment. The sequence is that of Enoyl-[acyl-carrier-protein] reductase, mitochondrial (ETR1) from Kluyveromyces lactis (strain ATCC 8585 / CBS 2359 / DSM 70799 / NBRC 1267 / NRRL Y-1140 / WM37) (Yeast).